Reading from the N-terminus, the 431-residue chain is 23S rRNA (uracil(1939)-C(5))-methyltransferase RlmD (431 aa).

In terms of domain architecture, TRAM spans 8–68 (KRRVTTRQII…SKYSRGQVKR (61 aa)). [4Fe-4S] cluster contacts are provided by cysteine 81, cysteine 87, cysteine 90, and cysteine 162. Positions 265, 294, 299, 315, 342, and 363 each coordinate S-adenosyl-L-methionine. Residue cysteine 389 is the Nucleophile of the active site.

It belongs to the class I-like SAM-binding methyltransferase superfamily. RNA M5U methyltransferase family. RlmD subfamily.

It catalyses the reaction uridine(1939) in 23S rRNA + S-adenosyl-L-methionine = 5-methyluridine(1939) in 23S rRNA + S-adenosyl-L-homocysteine + H(+). Its function is as follows. Catalyzes the formation of 5-methyl-uridine at position 1939 (m5U1939) in 23S rRNA. This Enterobacter sp. (strain 638) protein is 23S rRNA (uracil(1939)-C(5))-methyltransferase RlmD.